The primary structure comprises 469 residues: MPREIITIQVGQCGNQIGMEFWKQLCLEHGIGKDGLLEDFATQGGDRKDVFFYQADDQHFIPRSLLIDLEPRVINGIQNSEYRNLYNHENIFVAEHGGGAGNNWASGYHQGEQFVDDIMDMVDREADGSDSLEGFVLCHSIAGGTGSGMGSYLLETLNDRYSKKLVQTYSVFPNQVETSDVVVQPYNSLLTLKRLTLNADCVVVLDNTALNRIAVERLHLSNPTFAQTNSLVSTVMSASTTTLRYPGYMNNDLVGLLASLIPTPRCHFLMTGYTPLTVERQVNMIRKTTVLDVMRRLLQTKNIMVSSYARTKEASQAKYISILNIIQGEVDPTQVHESLQRIRERKLVNFIYWAPASIQVALSRKSPYVQTTHRVSGLMLANHTSIRHLFSKCLGQYEKLRKKQAFLDNYRKFPMFADNDLSEFDESREIIESLVDEYKACESPDYIKWGMEDPGEANVVAALDSKLVV.

142–148 (AGGTGSG) contacts GTP.

This sequence belongs to the tubulin family.

It localises to the cytoplasm. It is found in the cytoskeleton. The protein localises to the microtubule organizing center. Tubulin is the major constituent of microtubules. The gamma chain is found at microtubule organizing centers (MTOC) such as the spindle poles, suggesting that it is involved in the minus-end nucleation of microtubule assembly. In Zea mays (Maize), this protein is Tubulin gamma-1 chain (TUBG1).